The sequence spans 81 residues: Small ribosomal subunit protein bS16 (81 aa).

Belongs to the bacterial ribosomal protein bS16 family.

The chain is Small ribosomal subunit protein bS16 from Colwellia psychrerythraea (strain 34H / ATCC BAA-681) (Vibrio psychroerythus).